The following is a 167-amino-acid chain: CKLF-like MARVEL transmembrane domain-containing protein 7 (167 aa).

In terms of domain architecture, MARVEL spans 32–158; it reads YPLTHGALFK…SLWLSYKITC (127 aa). Helical transmembrane passes span 35 to 55, 69 to 89, 102 to 122, and 132 to 152; these read THGALFKVAQMVTLLIAFICV, FEVVTMCDLIMILIFYLVHLF, LSELLHYLIGTLLLLIASIVI, and LVAGAIFGFLASFLCLASLWL.

This sequence belongs to the chemokine-like factor family.

It is found in the membrane. This chain is CKLF-like MARVEL transmembrane domain-containing protein 7 (Cmtm7), found in Mus musculus (Mouse).